Here is a 391-residue protein sequence, read N- to C-terminus: Succinate--CoA ligase [ADP-forming] subunit beta (391 aa).

An ATP-grasp domain is found at Lys-9–Gln-246. ATP is bound by residues Lys-46, Gly-53 to Gly-55, Glu-99, Leu-102, and Glu-107. Asn-199 and Asp-213 together coordinate Mg(2+). Substrate-binding positions include Asn-266 and Gly-323 to Val-325.

The protein belongs to the succinate/malate CoA ligase beta subunit family. Heterotetramer of two alpha and two beta subunits. The cofactor is Mg(2+).

The enzyme catalyses succinate + ATP + CoA = succinyl-CoA + ADP + phosphate. It carries out the reaction GTP + succinate + CoA = succinyl-CoA + GDP + phosphate. The protein operates within carbohydrate metabolism; tricarboxylic acid cycle; succinate from succinyl-CoA (ligase route): step 1/1. Functionally, succinyl-CoA synthetase functions in the citric acid cycle (TCA), coupling the hydrolysis of succinyl-CoA to the synthesis of either ATP or GTP and thus represents the only step of substrate-level phosphorylation in the TCA. The beta subunit provides nucleotide specificity of the enzyme and binds the substrate succinate, while the binding sites for coenzyme A and phosphate are found in the alpha subunit. In Alkalilimnicola ehrlichii (strain ATCC BAA-1101 / DSM 17681 / MLHE-1), this protein is Succinate--CoA ligase [ADP-forming] subunit beta.